Consider the following 325-residue polypeptide: Biotin synthase (325 aa).

Residues 46 to 270 (NNSNNIDLCS…IAICKLILPN (225 aa)) enclose the Radical SAM core domain. [4Fe-4S] cluster is bound by residues C64, C68, and C71. [2Fe-2S] cluster contacts are provided by S107, C139, C198, and R274.

It belongs to the radical SAM superfamily. Biotin synthase family. Homodimer. [4Fe-4S] cluster serves as cofactor. [2Fe-2S] cluster is required as a cofactor.

It carries out the reaction (4R,5S)-dethiobiotin + (sulfur carrier)-SH + 2 reduced [2Fe-2S]-[ferredoxin] + 2 S-adenosyl-L-methionine = (sulfur carrier)-H + biotin + 2 5'-deoxyadenosine + 2 L-methionine + 2 oxidized [2Fe-2S]-[ferredoxin]. It functions in the pathway cofactor biosynthesis; biotin biosynthesis; biotin from 7,8-diaminononanoate: step 2/2. Its function is as follows. Catalyzes the conversion of dethiobiotin (DTB) to biotin by the insertion of a sulfur atom into dethiobiotin via a radical-based mechanism. In Methanococcus aeolicus (strain ATCC BAA-1280 / DSM 17508 / OCM 812 / Nankai-3), this protein is Biotin synthase.